The chain runs to 131 residues: Small ribosomal subunit protein uS11 (131 aa).

It belongs to the universal ribosomal protein uS11 family. In terms of assembly, part of the 30S ribosomal subunit. Interacts with proteins S7 and S18. Binds to IF-3.

In terms of biological role, located on the platform of the 30S subunit, it bridges several disparate RNA helices of the 16S rRNA. Forms part of the Shine-Dalgarno cleft in the 70S ribosome. This Dictyoglomus turgidum (strain DSM 6724 / Z-1310) protein is Small ribosomal subunit protein uS11.